Here is a 401-residue protein sequence, read N- to C-terminus: 8-amino-7-oxononanoate synthase (401 aa).

Residue Arg24 participates in substrate binding. Gly111–Phe112 contacts pyridoxal 5'-phosphate. His137 is a binding site for substrate. Pyridoxal 5'-phosphate contacts are provided by Ser183, His211, and Thr240. Position 243 is an N6-(pyridoxal phosphate)lysine (Lys243). Residue Thr357 participates in substrate binding.

The protein belongs to the class-II pyridoxal-phosphate-dependent aminotransferase family. BioF subfamily. In terms of assembly, homodimer. Requires pyridoxal 5'-phosphate as cofactor.

It carries out the reaction 6-carboxyhexanoyl-[ACP] + L-alanine + H(+) = (8S)-8-amino-7-oxononanoate + holo-[ACP] + CO2. The protein operates within cofactor biosynthesis; biotin biosynthesis. Functionally, catalyzes the decarboxylative condensation of pimeloyl-[acyl-carrier protein] and L-alanine to produce 8-amino-7-oxononanoate (AON), [acyl-carrier protein], and carbon dioxide. This is 8-amino-7-oxononanoate synthase from Xanthomonas axonopodis pv. citri (strain 306).